The chain runs to 240 residues: Protein FANTASTIC FOUR 2 (240 aa).

Disordered stretches follow at residues threonine 89 to lysine 124 and leucine 177 to leucine 229. An FAF domain is found at asparagine 117 to leucine 171. The segment covering glutamate 184 to glutamate 200 has biased composition (acidic residues). The span at glycine 207–arginine 216 shows a compositional bias: basic residues. Over residues arginine 217–lysine 226 the composition is skewed to basic and acidic residues.

It belongs to the fantastic four family. As to expression, expressed in the shoot apex, stamens, carpels and young siliques. Detected in provascular and vascular tissue, and in the center of the vegetative and inflorescence meristems. Expressed in the funiculus. In roots and leaves, predominantly expressed in phloem.

In terms of biological role, regulates the size of the shoot meristem by modulating the CLV3-WUS feedback loop. Can repress WUS but is under negative control by CLV3. The chain is Protein FANTASTIC FOUR 2 (FAF2) from Arabidopsis thaliana (Mouse-ear cress).